We begin with the raw amino-acid sequence, 56 residues long: Small ribosomal subunit protein uS14B (56 aa).

Residues cysteine 21 and cysteine 24 each contribute to the Zn(2+) site. Serine 25 bears the Phosphoserine mark. Zn(2+) contacts are provided by cysteine 39 and cysteine 42.

Belongs to the universal ribosomal protein uS14 family. In terms of assembly, component of the small ribosomal subunit (SSU). Mature yeast ribosomes consist of a small (40S) and a large (60S) subunit. The 40S small subunit contains 1 molecule of ribosomal RNA (18S rRNA) and 33 different proteins (encoded by 57 genes). The large 60S subunit contains 3 rRNA molecules (25S, 5.8S and 5S rRNA) and 46 different proteins (encoded by 81 genes). Zn(2+) is required as a cofactor.

Its subcellular location is the cytoplasm. Component of the ribosome, a large ribonucleoprotein complex responsible for the synthesis of proteins in the cell. The small ribosomal subunit (SSU) binds messenger RNAs (mRNAs) and translates the encoded message by selecting cognate aminoacyl-transfer RNA (tRNA) molecules. The large subunit (LSU) contains the ribosomal catalytic site termed the peptidyl transferase center (PTC), which catalyzes the formation of peptide bonds, thereby polymerizing the amino acids delivered by tRNAs into a polypeptide chain. The nascent polypeptides leave the ribosome through a tunnel in the LSU and interact with protein factors that function in enzymatic processing, targeting, and the membrane insertion of nascent chains at the exit of the ribosomal tunnel. This Saccharomyces cerevisiae (strain ATCC 204508 / S288c) (Baker's yeast) protein is Small ribosomal subunit protein uS14B.